We begin with the raw amino-acid sequence, 454 residues long: Bifunctional protein GlmU (454 aa).

A pyrophosphorylase region spans residues 1 to 226 (MALNVVILAA…AVEVEGANNR (226 aa)). Residues 8–11 (LAAG), Lys-22, Gln-73, 78–79 (GT), 100–102 (YGD), Gly-137, Glu-151, Asn-166, and Asn-224 each bind UDP-N-acetyl-alpha-D-glucosamine. A Mg(2+)-binding site is contributed by Asp-102. Mg(2+) is bound at residue Asn-224. Residues 227-247 (VQLAQLERAYQARAAEKLMLE) form a linker region. The N-acetyltransferase stretch occupies residues 248-454 (GANLRDPARI…GWPRPVKLKK (207 aa)). UDP-N-acetyl-alpha-D-glucosamine-binding residues include Arg-330 and Lys-348. Residue His-360 is the Proton acceptor of the active site. Tyr-363 and Asn-374 together coordinate UDP-N-acetyl-alpha-D-glucosamine. Acetyl-CoA-binding positions include Ala-377, 383 to 384 (NY), Ser-402, Ala-420, and Arg-437.

In the N-terminal section; belongs to the N-acetylglucosamine-1-phosphate uridyltransferase family. The protein in the C-terminal section; belongs to the transferase hexapeptide repeat family. Homotrimer. Mg(2+) serves as cofactor.

It is found in the cytoplasm. It catalyses the reaction alpha-D-glucosamine 1-phosphate + acetyl-CoA = N-acetyl-alpha-D-glucosamine 1-phosphate + CoA + H(+). It carries out the reaction N-acetyl-alpha-D-glucosamine 1-phosphate + UTP + H(+) = UDP-N-acetyl-alpha-D-glucosamine + diphosphate. It participates in nucleotide-sugar biosynthesis; UDP-N-acetyl-alpha-D-glucosamine biosynthesis; N-acetyl-alpha-D-glucosamine 1-phosphate from alpha-D-glucosamine 6-phosphate (route II): step 2/2. Its pathway is nucleotide-sugar biosynthesis; UDP-N-acetyl-alpha-D-glucosamine biosynthesis; UDP-N-acetyl-alpha-D-glucosamine from N-acetyl-alpha-D-glucosamine 1-phosphate: step 1/1. It functions in the pathway bacterial outer membrane biogenesis; LPS lipid A biosynthesis. In terms of biological role, catalyzes the last two sequential reactions in the de novo biosynthetic pathway for UDP-N-acetylglucosamine (UDP-GlcNAc). The C-terminal domain catalyzes the transfer of acetyl group from acetyl coenzyme A to glucosamine-1-phosphate (GlcN-1-P) to produce N-acetylglucosamine-1-phosphate (GlcNAc-1-P), which is converted into UDP-GlcNAc by the transfer of uridine 5-monophosphate (from uridine 5-triphosphate), a reaction catalyzed by the N-terminal domain. This chain is Bifunctional protein GlmU, found in Shewanella pealeana (strain ATCC 700345 / ANG-SQ1).